A 252-amino-acid chain; its full sequence is 5'-nucleotidase SurE (252 aa).

Positions 8, 9, 39, and 95 each coordinate a divalent metal cation.

This sequence belongs to the SurE nucleotidase family. Requires a divalent metal cation as cofactor.

Its subcellular location is the cytoplasm. The enzyme catalyses a ribonucleoside 5'-phosphate + H2O = a ribonucleoside + phosphate. Its function is as follows. Nucleotidase that shows phosphatase activity on nucleoside 5'-monophosphates. In Clostridium botulinum (strain ATCC 19397 / Type A), this protein is 5'-nucleotidase SurE.